Reading from the N-terminus, the 239-residue chain is Acidic leucine-rich nuclear phosphoprotein 32 family member B (239 aa).

4 LRR repeats span residues 16–40 (AADA…LTSE), 43–64 (SLEF…PKLP), 65–87 (KLKK…AERT), and 89–110 (NLTH…EPLK). Positions 123-165 (CEVTMLNNYRESVFELLPKLTFLDGFDADDQEAPDSDPEAEDL) constitute an LRRCT domain. Residues 149 to 215 (DADDQEAPDS…EEDEDDEDVP (67 aa)) show a composition bias toward acidic residues. Residues 149–239 (DADDQEAPDS…EEEEDDEDDE (91 aa)) form a disordered region. Positions 216 to 225 (QGEKRKRDLS) are enriched in basic and acidic residues. Residues 226–239 (DEGEEEEEDDEDDE) are compositionally biased toward acidic residues.

It belongs to the ANP32 family.

The protein localises to the nucleus. In terms of biological role, multifunctional protein working as a cell cycle progression factor as well as a cell survival factor. Required for the progression from the G1 to the S phase. Anti-apoptotic protein which functions as a caspase-3 inhibitor. Has no phosphatase 2A (PP2A) inhibitor activity. Exhibits histone chaperone properties, stimulating core histones to assemble into a nucleosome. In Xenopus laevis (African clawed frog), this protein is Acidic leucine-rich nuclear phosphoprotein 32 family member B (anp32b).